The primary structure comprises 567 residues: Urease subunit alpha (567 aa).

The 439-residue stretch at 129-567 (GGIDSHIHFI…LPLAQRYFLF (439 aa)) folds into the Urease domain. Residues H134, H136, and K217 each coordinate Ni(2+). K217 carries the post-translational modification N6-carboxylysine. H219 lines the substrate pocket. Ni(2+)-binding residues include H246 and H272. Catalysis depends on H320, which acts as the Proton donor. Residue D360 participates in Ni(2+) binding.

This sequence belongs to the metallo-dependent hydrolases superfamily. Urease alpha subunit family. Heterotrimer of UreA (gamma), UreB (beta) and UreC (alpha) subunits. Three heterotrimers associate to form the active enzyme. Requires Ni cation as cofactor. Post-translationally, carboxylation allows a single lysine to coordinate two nickel ions.

Its subcellular location is the cytoplasm. It carries out the reaction urea + 2 H2O + H(+) = hydrogencarbonate + 2 NH4(+). It functions in the pathway nitrogen metabolism; urea degradation; CO(2) and NH(3) from urea (urease route): step 1/1. This chain is Urease subunit alpha, found in Pseudomonas putida (strain W619).